A 164-amino-acid chain; its full sequence is Ubiquitin-fold modifier-conjugating enzyme 1 (164 aa).

The active-site Glycyl thioester intermediate is cysteine 116.

This sequence belongs to the ubiquitin-conjugating enzyme family. UFC1 subfamily.

Functionally, E2-like enzyme which forms an intermediate with UFM1 via a thioester linkage. This Drosophila ananassae (Fruit fly) protein is Ubiquitin-fold modifier-conjugating enzyme 1.